We begin with the raw amino-acid sequence, 433 residues long: Delta-aminolevulinic acid dehydratase, chloroplastic (433 aa).

The N-terminal 56 residues, 1-56 (MASTFNIPCNAGTIKNFNNSQRNLGFSSNLGINFAKTRFSNCGDSGRIPSQLVVRA), are a transit peptide targeting the chloroplast. The disordered stretch occupies residues 83–115 (NAPSAPPVPPTPKAPSGTPSVSPLSLGRRPRRN). Residues 86 to 95 (SAPPVPPTPK) are compositionally biased toward pro residues. Catalysis depends on Lys-301, which acts as the Schiff-base intermediate with substrate. Arg-311 and Lys-323 together coordinate 5-aminolevulinate. Glu-339 is a Mg(2+) binding site. Lys-354 functions as the Schiff-base intermediate with substrate in the catalytic mechanism. 2 residues coordinate 5-aminolevulinate: Ser-380 and Tyr-419.

It belongs to the ALAD family. In terms of assembly, homooctamer. Mg(2+) serves as cofactor.

Its subcellular location is the plastid. The protein resides in the chloroplast. It carries out the reaction 2 5-aminolevulinate = porphobilinogen + 2 H2O + H(+). It functions in the pathway porphyrin-containing compound metabolism; protoporphyrin-IX biosynthesis; coproporphyrinogen-III from 5-aminolevulinate: step 1/4. Catalyzes an early step in the biosynthesis of tetrapyrroles. Binds two molecules of 5-aminolevulinate per subunit, each at a distinct site, and catalyzes their condensation to form porphobilinogen. This Spinacia oleracea (Spinach) protein is Delta-aminolevulinic acid dehydratase, chloroplastic (HEMB).